A 213-amino-acid chain; its full sequence is Imidazole glycerol phosphate synthase subunit HisH 1 (213 aa).

The Glutamine amidotransferase type-1 domain occupies Thr4–Trp213. Cys82 serves as the catalytic Nucleophile. Active-site residues include His191 and Glu193.

As to quaternary structure, heterodimer of HisH and HisF.

The protein localises to the cytoplasm. It carries out the reaction 5-[(5-phospho-1-deoxy-D-ribulos-1-ylimino)methylamino]-1-(5-phospho-beta-D-ribosyl)imidazole-4-carboxamide + L-glutamine = D-erythro-1-(imidazol-4-yl)glycerol 3-phosphate + 5-amino-1-(5-phospho-beta-D-ribosyl)imidazole-4-carboxamide + L-glutamate + H(+). It catalyses the reaction L-glutamine + H2O = L-glutamate + NH4(+). It participates in amino-acid biosynthesis; L-histidine biosynthesis; L-histidine from 5-phospho-alpha-D-ribose 1-diphosphate: step 5/9. IGPS catalyzes the conversion of PRFAR and glutamine to IGP, AICAR and glutamate. The HisH subunit provides the glutamine amidotransferase activity that produces the ammonia necessary to HisF for the synthesis of IGP and AICAR. The chain is Imidazole glycerol phosphate synthase subunit HisH 1 (hisH1) from Pseudomonas aeruginosa (strain ATCC 15692 / DSM 22644 / CIP 104116 / JCM 14847 / LMG 12228 / 1C / PRS 101 / PAO1).